Consider the following 144-residue polypeptide: Large ribosomal subunit protein uL15 (144 aa).

Residues 1–53 form a disordered region; that stretch reads MRLNTLSPAVGAKSAPKRVGRGIGSGLGKTAGRGHKGQKSRSGGGVRPGFEGG. 2 stretches are compositionally biased toward gly residues: residues 21 to 31 and 42 to 52; these read RGIGSGLGKTA and SGGGVRPGFEG.

Belongs to the universal ribosomal protein uL15 family. Part of the 50S ribosomal subunit.

Binds to the 23S rRNA. The protein is Large ribosomal subunit protein uL15 of Shewanella amazonensis (strain ATCC BAA-1098 / SB2B).